The following is a 571-amino-acid chain: Vesicle-associated protein 1-4 (571 aa).

The region spanning 1–126 is the MSP 1 domain; the sequence is MSTDELLTFD…EETIFKIIYV (126 aa). The interval 132-154 is disordered; that stretch reads QSPVQEGLEDGSSPSASVSDKGN. The span at 143-153 shows a compositional bias: polar residues; that stretch reads SSPSASVSDKG. Residues 176–296 form the MSP 2 domain; the sequence is LLIIDPVDVQ…EETRLKVMYV (121 aa). Residues 297–322 form a disordered region; sequence TPPQPPSPVQEGTEEGSSPRASVSDN. Residues 311–322 are compositionally biased toward polar residues; it reads EGSSPRASVSDN. The region spanning 356–493 is the TIR domain; sequence PQYQVFINFR…KWKEALSSVF (138 aa). Residue E430 is part of the active site.

This sequence belongs to the VAMP-associated protein (VAP) (TC 9.B.17) family.

The catalysed reaction is NAD(+) + H2O = ADP-D-ribose + nicotinamide + H(+). Functionally, may play a role in vesicle trafficking. This is Vesicle-associated protein 1-4 (PVA14) from Arabidopsis thaliana (Mouse-ear cress).